A 1052-amino-acid polypeptide reads, in one-letter code: Isoleucine--tRNA ligase (1052 aa).

Residues 58-68 (PFANGLPHYGH) carry the 'HIGH' region motif. Residues 627–631 (KMSKS) carry the 'KMSKS' region motif. Residue Lys-630 coordinates ATP.

It belongs to the class-I aminoacyl-tRNA synthetase family. IleS type 2 subfamily. Monomer. Requires Zn(2+) as cofactor.

It localises to the cytoplasm. The catalysed reaction is tRNA(Ile) + L-isoleucine + ATP = L-isoleucyl-tRNA(Ile) + AMP + diphosphate. Catalyzes the attachment of isoleucine to tRNA(Ile). As IleRS can inadvertently accommodate and process structurally similar amino acids such as valine, to avoid such errors it has two additional distinct tRNA(Ile)-dependent editing activities. One activity is designated as 'pretransfer' editing and involves the hydrolysis of activated Val-AMP. The other activity is designated 'posttransfer' editing and involves deacylation of mischarged Val-tRNA(Ile). The sequence is that of Isoleucine--tRNA ligase from Corynebacterium diphtheriae (strain ATCC 700971 / NCTC 13129 / Biotype gravis).